We begin with the raw amino-acid sequence, 161 residues long: Cap-associated protein CAF20 (161 aa).

Residues 52–72 (HFGRRRSSHHHGRPKIKHNKP) show a composition bias toward basic residues. The interval 52-108 (HFGRRRSSHHHGRPKIKHNKPKVTTDSDGWCTFEAKKKGSGEDDEEETETTPTSTVP) is disordered. Ser-78 and Ser-91 each carry phosphoserine. Phosphothreonine occurs at positions 99, 101, and 102. Ser-154 carries the phosphoserine modification.

The protein belongs to the CAF20 family. In terms of assembly, interacts with TIF45. In terms of processing, phosphorylated by casein kinase II complex (CK2).

The protein localises to the cytoplasm. Its function is as follows. Acts as an inhibitor of cap-dependent translation. Competes with eIF4G1/TIF4631 and EAP1 for binding to eIF4E/TIF45 and interferes with the formation of the eIF4F complex, inhibiting translation and stabilizing mRNA. Binding affinity for eIF4E/TIF45 is 10-fold less than that of eIF4G1/TIF4631. Required for induction of pseudohyphal growth in response to nitrogen limitation, probably by regulating STE12 translation. The polypeptide is Cap-associated protein CAF20 (CAF20) (Saccharomyces cerevisiae (strain YJM789) (Baker's yeast)).